Reading from the N-terminus, the 264-residue chain is Thymidylate synthase (264 aa).

Arg-21 lines the dUMP pocket. Residue His-51 coordinates (6R)-5,10-methylene-5,6,7,8-tetrahydrofolate. 126–127 (RR) is a dUMP binding site. Cys-146 serves as the catalytic Nucleophile. Residues 166-169 (RSAD), Asn-177, and 207-209 (HLY) contribute to the dUMP site. (6R)-5,10-methylene-5,6,7,8-tetrahydrofolate is bound at residue Asp-169. (6R)-5,10-methylene-5,6,7,8-tetrahydrofolate is bound at residue Ala-263.

The protein belongs to the thymidylate synthase family. Bacterial-type ThyA subfamily. In terms of assembly, homodimer.

It is found in the cytoplasm. It catalyses the reaction dUMP + (6R)-5,10-methylene-5,6,7,8-tetrahydrofolate = 7,8-dihydrofolate + dTMP. The protein operates within pyrimidine metabolism; dTTP biosynthesis. In terms of biological role, catalyzes the reductive methylation of 2'-deoxyuridine-5'-monophosphate (dUMP) to 2'-deoxythymidine-5'-monophosphate (dTMP) while utilizing 5,10-methylenetetrahydrofolate (mTHF) as the methyl donor and reductant in the reaction, yielding dihydrofolate (DHF) as a by-product. This enzymatic reaction provides an intracellular de novo source of dTMP, an essential precursor for DNA biosynthesis. This chain is Thymidylate synthase, found in Paramagnetospirillum magneticum (strain ATCC 700264 / AMB-1) (Magnetospirillum magneticum).